A 118-amino-acid chain; its full sequence is Large ribosomal subunit protein bL20 (118 aa).

It belongs to the bacterial ribosomal protein bL20 family.

Functionally, binds directly to 23S ribosomal RNA and is necessary for the in vitro assembly process of the 50S ribosomal subunit. It is not involved in the protein synthesizing functions of that subunit. The sequence is that of Large ribosomal subunit protein bL20 from Syntrophotalea carbinolica (strain DSM 2380 / NBRC 103641 / GraBd1) (Pelobacter carbinolicus).